The following is a 527-amino-acid chain: Ribonuclease Y 2 (527 aa).

Residues 2 to 22 traverse the membrane as a helical segment; that stretch reads IAMIATAIIGIVAGGGLGWAL. Residues 339-432 form the HD domain; that stretch reads QYFHCGEVGW…VIAADAVSGA (94 aa).

This sequence belongs to the RNase Y family.

Its subcellular location is the cell membrane. In terms of biological role, endoribonuclease that initiates mRNA decay. The protein is Ribonuclease Y 2 of Bdellovibrio bacteriovorus (strain ATCC 15356 / DSM 50701 / NCIMB 9529 / HD100).